The primary structure comprises 335 residues: Lipase chaperone (335 aa).

Residues 7–23 traverse the membrane as a helical segment; the sequence is LLPLAIALGLGFFIARP.

Belongs to the lipase chaperone family.

It is found in the cell inner membrane. Its function is as follows. May be involved in the folding of the extracellular lipase during its passage through the periplasm. The chain is Lipase chaperone (lifO) from Ectopseudomonas mendocina (Pseudomonas mendocina).